Reading from the N-terminus, the 212-residue chain is Ras-related protein Rab-15 (212 aa).

Positions 17, 18, 19, 20, 21, 22, 23, 35, 39, and 40 each coordinate GTP. Thr-22 is a Mg(2+) binding site. 2 consecutive short sequence motifs (switch) follow at residues 31–45 and 63–80; these read NEFH…GVDF and DTAG…YYRR. Positions 40 and 63 each coordinate Mg(2+). GTP-binding residues include Gly-66, Asn-121, Lys-122, Asp-124, Ser-151, and Ala-152. S-geranylgeranyl cysteine attachment occurs at residues Cys-210 and Cys-212. Cys-212 is modified (cysteine methyl ester).

The protein belongs to the small GTPase superfamily. Rab family. The GTP bound form of RAB15 interacts with REP15. Interacts (GTP-bound form) with MICAL1, MICAL3, MICALCL, EHBP1 and EHBP1L1. Mg(2+) serves as cofactor. As to expression, expressed predominantly in neural tissues.

The protein resides in the cell membrane. It catalyses the reaction GTP + H2O = GDP + phosphate + H(+). With respect to regulation, regulated by guanine nucleotide exchange factors (GEFs) which promote the exchange of bound GDP for free GTP. Regulated by GTPase activating proteins (GAPs) which increase the GTP hydrolysis activity. Inhibited by GDP dissociation inhibitors (GDIs). In terms of biological role, the small GTPases Rab are key regulators of intracellular membrane trafficking, from the formation of transport vesicles to their fusion with membranes. Rabs cycle between an inactive GDP-bound form and an active GTP-bound form that is able to recruit to membranes different sets of downstream effectors directly responsible for vesicle formation, movement, tethering and fusion. RAB15 may act in concert with RAB3A in regulating aspects of synaptic vesicle membrane flow within the nerve terminal. This is Ras-related protein Rab-15 from Rattus norvegicus (Rat).